The chain runs to 235 residues: Probable 2-phosphosulfolactate phosphatase (235 aa).

The protein belongs to the ComB family. Mg(2+) is required as a cofactor.

The enzyme catalyses (2R)-O-phospho-3-sulfolactate + H2O = (2R)-3-sulfolactate + phosphate. This Clostridium novyi (strain NT) protein is Probable 2-phosphosulfolactate phosphatase.